Here is a 302-residue protein sequence, read N- to C-terminus: Lipoyl synthase (302 aa).

C54, C59, C65, C80, C84, C87, and S291 together coordinate [4Fe-4S] cluster. The 215-residue stretch at 66–280 (WSRKTATYML…RIYGKSIGFK (215 aa)) folds into the Radical SAM core domain.

It belongs to the radical SAM superfamily. Lipoyl synthase family. [4Fe-4S] cluster is required as a cofactor.

Its subcellular location is the cytoplasm. The enzyme catalyses [[Fe-S] cluster scaffold protein carrying a second [4Fe-4S](2+) cluster] + N(6)-octanoyl-L-lysyl-[protein] + 2 oxidized [2Fe-2S]-[ferredoxin] + 2 S-adenosyl-L-methionine + 4 H(+) = [[Fe-S] cluster scaffold protein] + N(6)-[(R)-dihydrolipoyl]-L-lysyl-[protein] + 4 Fe(3+) + 2 hydrogen sulfide + 2 5'-deoxyadenosine + 2 L-methionine + 2 reduced [2Fe-2S]-[ferredoxin]. It participates in protein modification; protein lipoylation via endogenous pathway; protein N(6)-(lipoyl)lysine from octanoyl-[acyl-carrier-protein]: step 2/2. Its function is as follows. Catalyzes the radical-mediated insertion of two sulfur atoms into the C-6 and C-8 positions of the octanoyl moiety bound to the lipoyl domains of lipoate-dependent enzymes, thereby converting the octanoylated domains into lipoylated derivatives. The chain is Lipoyl synthase from Leptospira borgpetersenii serovar Hardjo-bovis (strain JB197).